The primary structure comprises 187 residues: Pyridoxal 5'-phosphate synthase subunit PdxT (187 aa).

Glycine 47–serine 49 provides a ligand contact to L-glutamine. The active-site Nucleophile is the cysteine 76. L-glutamine contacts are provided by residues arginine 102 and isoleucine 128–arginine 129. Catalysis depends on charge relay system residues histidine 165 and glutamate 167.

It belongs to the glutaminase PdxT/SNO family. As to quaternary structure, in the presence of PdxS, forms a dodecamer of heterodimers. Only shows activity in the heterodimer.

The catalysed reaction is aldehydo-D-ribose 5-phosphate + D-glyceraldehyde 3-phosphate + L-glutamine = pyridoxal 5'-phosphate + L-glutamate + phosphate + 3 H2O + H(+). The enzyme catalyses L-glutamine + H2O = L-glutamate + NH4(+). It functions in the pathway cofactor biosynthesis; pyridoxal 5'-phosphate biosynthesis. Its function is as follows. Catalyzes the hydrolysis of glutamine to glutamate and ammonia as part of the biosynthesis of pyridoxal 5'-phosphate. The resulting ammonia molecule is channeled to the active site of PdxS. The protein is Pyridoxal 5'-phosphate synthase subunit PdxT of Methanococcus maripaludis (strain C7 / ATCC BAA-1331).